The chain runs to 486 residues: Dipeptide and tripeptide permease B (486 aa).

Topologically, residues 1 to 27 (MNKPVSIGLLQQPKPFFMIFFVELWER) are cytoplasmic. A helical membrane pass occupies residues 28–48 (FGYYGVQGVLTVYFVQKLGFS). The Periplasmic portion of the chain corresponds to 49–52 (QEQA). Residues 53-73 (FITFGAFAALVFGLISIGGYV) traverse the membrane as a helical segment. Topologically, residues 74-82 (GDHLLGTKR) are cytoplasmic. The chain crosses the membrane as a helical span at residues 83–103 (TIVLGAIVLAIGYFMTGLSIL). At 104–106 (HPN) the chain is on the periplasmic side. Residues 107-127 (LIFYALGTIAVGNGLFKANPA) traverse the membrane as a helical segment. The Cytoplasmic portion of the chain corresponds to 128 to 146 (SLLSKCYPPKDPRLDGAFT). The helical transmembrane segment at 147 to 167 (LFYMSINLGSLFSLALAPVIA) threads the bilayer. At 168 to 172 (EKFSY) the chain is on the periplasmic side. Residues 173–193 (AVTYNICGIGLIIALLVYIFC) traverse the membrane as a helical segment. Topologically, residues 194–211 (RNTVRNIGSEPDHQRINY) are cytoplasmic. The helical transmembrane segment at 212-232 (TNLFLVVAGSVVMVYVCAWLM) threads the bilayer. H233 is a topological domain (periplasmic). Residues 234-254 (NVKIANIMLITLSVIVVFIFF) form a helical membrane-spanning segment. The Cytoplasmic portion of the chain corresponds to 255–267 (REALKQDKIGRNK). A helical membrane pass occupies residues 268–288 (MFVAFILMLQAIVFFILYAQM). Residues 289–311 (PTSLNFFAIHNVHHQLLGFNINP) lie on the Periplasmic side of the membrane. Residues 312 to 332 (VSFQALNPFWIVVASPILAVL) form a helical membrane-spanning segment. At 333-348 (YTHWGAKGKDLTMPAK) the chain is on the cytoplasmic side. Residues 349-369 (FAVGMFLCSLGFLTAAAAGLW) form a helical membrane-spanning segment. Residues 370–375 (FADEQG) are Periplasmic-facing. The chain crosses the membrane as a helical span at residues 376–396 (LTSAWFIVLVYLFQGVGELMI). Topologically, residues 397-419 (SALGLAMIAALVPQYLMGFILGM) are cytoplasmic. Residues 420-440 (WYLTQATSSLLGGYVAALTAA) traverse the membrane as a helical segment. The Periplasmic segment spans residues 441–456 (PKGITDPLQTLPVYTS). The chain crosses the membrane as a helical span at residues 457–477 (VFGKIGIATFIVAIIMAATVP). Over 478–486 (LLNRMMQEK) the chain is Cytoplasmic.

It belongs to the major facilitator superfamily. Proton-dependent oligopeptide transporter (POT/PTR) (TC 2.A.17) family. DtpB subfamily.

It is found in the cell inner membrane. Proton-dependent permease that transports di- and tripeptides. This chain is Dipeptide and tripeptide permease B, found in Photorhabdus luminescens (Xenorhabdus luminescens).